Consider the following 1071-residue polypeptide: Methionine S-methyltransferase (1071 aa).

A2 carries the post-translational modification N-acetylalanine.

This sequence belongs to the class I-like SAM-binding methyltransferase superfamily. As to quaternary structure, homotetramer. In terms of tissue distribution, expressed in roots, rosette leaves and cauline leaves. Expressed at a lower level in developing seeds.

It localises to the cytoplasm. The enzyme catalyses L-methionine + S-adenosyl-L-methionine = S-methyl-L-methionine + S-adenosyl-L-homocysteine. Functionally, catalyzes the S-methylmethionine (SMM) biosynthesis from adenosyl-L-homocysteine (AdoMet) and methionine. SMM biosynthesis (by MMT1) and degradation (by HMT-1, HMT-2 and HMT-3) constitute the SMM cycle in plants, which is probably required to achieve short term control of AdoMet level. Also able to catalyze the selenium-methylmethionine (SeMM) from AdoMet and selenium-methionine (SeMet). May play a role in phoem sulfur transport; such function is however not essential. This chain is Methionine S-methyltransferase (MMT1), found in Arabidopsis thaliana (Mouse-ear cress).